Here is a 204-residue protein sequence, read N- to C-terminus: Outer-membrane lipoprotein carrier protein (204 aa).

A signal peptide spans 1–21 (MKKIAVTCALLSAFAVSSVWA). A disordered region spans residues 169–204 (QRSSYQLKSQQNGAVDMSKFTFTPPQGVTVDDQRNK). Over residues 171 to 181 (SSYQLKSQQNG) the composition is skewed to polar residues.

It belongs to the LolA family. In terms of assembly, monomer.

It is found in the periplasm. Its function is as follows. Participates in the translocation of lipoproteins from the inner membrane to the outer membrane. Only forms a complex with a lipoprotein if the residue after the N-terminal Cys is not an aspartate (The Asp acts as a targeting signal to indicate that the lipoprotein should stay in the inner membrane). This chain is Outer-membrane lipoprotein carrier protein, found in Cronobacter sakazakii (strain ATCC BAA-894) (Enterobacter sakazakii).